The sequence spans 100 residues: NADH-quinone oxidoreductase subunit K (100 aa).

Helical transmembrane passes span 4 to 24 (ITYYLLLAAALFCMGMFGVLV), 29 to 49 (LVVFMSVELMLNAANLTFVAF), and 63 to 83 (FFVIAVAAAEAAIGLAIVIAV).

This sequence belongs to the complex I subunit 4L family. NDH-1 is composed of 14 different subunits. Subunits NuoA, H, J, K, L, M, N constitute the membrane sector of the complex.

The protein localises to the cell inner membrane. The catalysed reaction is a quinone + NADH + 5 H(+)(in) = a quinol + NAD(+) + 4 H(+)(out). NDH-1 shuttles electrons from NADH, via FMN and iron-sulfur (Fe-S) centers, to quinones in the respiratory chain. The immediate electron acceptor for the enzyme in this species is believed to be ubiquinone. Couples the redox reaction to proton translocation (for every two electrons transferred, four hydrogen ions are translocated across the cytoplasmic membrane), and thus conserves the redox energy in a proton gradient. This Myxococcus xanthus (strain DK1622) protein is NADH-quinone oxidoreductase subunit K.